The following is a 245-amino-acid chain: MKKYDRKIVLDIETTGMNPAGCFYKNHKIIEIGAVEMINNVFTGNNFHSYIQPNRLIDKQSFKIHGITDNFLLDKPKFHEISVKFLEYITNSDLIIHNAKFDVGFINYELNMINSDKRKISDYCNVVDTLPLARQLFPGKKNSLDALCNRYKINVSHRDFHSALIDAKLLAKVYTFMTSFQQSISIFDKNSNLNSIQKNAKLDSRVPFRSTLLLATKDELQQHMKYLKYVKQETGNCVWLEDKYN.

A divalent metal cation-binding residues include Asp-11 and Glu-13. Substrate contacts are provided by Asp-11, Glu-13, Gln-60, and His-65. His-161 acts as the Proton acceptor in catalysis. Residue Asp-166 coordinates a divalent metal cation. Asp-166 contributes to the substrate binding site.

As to quaternary structure, the DNA polymerase holoenzyme is a complex that contains 10 different types of subunits. These subunits are organized into 3 functionally essential subassemblies: the pol III core, the beta sliding clamp processivity factor and the clamp-loading complex. The pol III core (subunits alpha,epsilon and theta) contains the polymerase and the 3'-5' exonuclease proofreading activities. The polymerase is tethered to the template via the sliding clamp processivity factor. The clamp-loading complex assembles the beta processivity factor onto the primer template and plays a central role in the organization and communication at the replication fork. This complex contains delta, delta', psi and chi, and copies of either or both of two different DnaX proteins, gamma and tau. The composition of the holoenzyme is, therefore: (alpha,epsilon,theta)[2]-(gamma/tau)[3]-delta,delta', psi,chi-beta[4]. Requires Mg(2+) as cofactor. Mn(2+) serves as cofactor.

It catalyses the reaction DNA(n) + a 2'-deoxyribonucleoside 5'-triphosphate = DNA(n+1) + diphosphate. DNA polymerase III is a complex, multichain enzyme responsible for most of the replicative synthesis in bacteria. The epsilon subunit contain the editing function and is a proofreading 3'-5' exonuclease. This chain is DNA polymerase III subunit epsilon (dnaQ), found in Buchnera aphidicola subsp. Baizongia pistaciae (strain Bp).